A 294-amino-acid polypeptide reads, in one-letter code: Cytidine deaminase (294 aa).

CMP/dCMP-type deaminase domains follow at residues Asp-48 to Lys-168 and Leu-186 to Gly-294. Asn-89–Glu-91 provides a ligand contact to substrate. His-102 provides a ligand contact to Zn(2+). The Proton donor role is filled by Glu-104. Zn(2+) is bound by residues Cys-129 and Cys-132.

This sequence belongs to the cytidine and deoxycytidylate deaminase family. Homodimer. Zn(2+) serves as cofactor.

It catalyses the reaction cytidine + H2O + H(+) = uridine + NH4(+). It carries out the reaction 2'-deoxycytidine + H2O + H(+) = 2'-deoxyuridine + NH4(+). Functionally, this enzyme scavenges exogenous and endogenous cytidine and 2'-deoxycytidine for UMP synthesis. The polypeptide is Cytidine deaminase (Salmonella agona (strain SL483)).